The chain runs to 216 residues: Ras-related protein RABA1b (216 aa).

20-27 (GDSGVGKS) contacts GTP. Residues 42-50 (SKSTIGVEF) carry the Effector region motif. GTP contacts are provided by residues 68–72 (DTAGQ), 126–129 (NKSD), and 156–157 (SA). S-geranylgeranyl cysteine attachment occurs at residues cysteine 213 and cysteine 214.

Belongs to the small GTPase superfamily. Rab family.

Its subcellular location is the cell membrane. In terms of biological role, intracellular vesicle trafficking and protein transport. This is Ras-related protein RABA1b (RABA1B) from Arabidopsis thaliana (Mouse-ear cress).